Reading from the N-terminus, the 106-residue chain is uncharacterized protein (106 aa).

A signal peptide spans Met1 to Gly25.

This sequence to the N-terminal of the FimA/PapA family of fimbria proteins.

This is an uncharacterized protein from Salmonella typhi.